The chain runs to 471 residues: ATP synthase subunit beta (471 aa).

Glycine 156–threonine 163 lines the ATP pocket.

This sequence belongs to the ATPase alpha/beta chains family. F-type ATPases have 2 components, CF(1) - the catalytic core - and CF(0) - the membrane proton channel. CF(1) has five subunits: alpha(3), beta(3), gamma(1), delta(1), epsilon(1). CF(0) has three main subunits: a(1), b(2) and c(9-12). The alpha and beta chains form an alternating ring which encloses part of the gamma chain. CF(1) is attached to CF(0) by a central stalk formed by the gamma and epsilon chains, while a peripheral stalk is formed by the delta and b chains.

It localises to the cell inner membrane. The enzyme catalyses ATP + H2O + 4 H(+)(in) = ADP + phosphate + 5 H(+)(out). Produces ATP from ADP in the presence of a proton gradient across the membrane. The catalytic sites are hosted primarily by the beta subunits. The polypeptide is ATP synthase subunit beta (Nitratidesulfovibrio vulgaris (strain DSM 19637 / Miyazaki F) (Desulfovibrio vulgaris)).